The sequence spans 224 residues: Redox-sensing transcriptional repressor Rex (224 aa).

Positions 17 to 56 form a DNA-binding region, H-T-H motif; it reads RYHRYLEELLKNDVKRISSRELSEKMGVTASQIRQDLNNF. 91-96 lines the NAD(+) pocket; the sequence is GAGNLG.

It belongs to the transcriptional regulatory Rex family. As to quaternary structure, homodimer.

The protein localises to the cytoplasm. In terms of biological role, modulates transcription in response to changes in cellular NADH/NAD(+) redox state. The polypeptide is Redox-sensing transcriptional repressor Rex (Thermoanaerobacter pseudethanolicus (strain ATCC 33223 / 39E) (Clostridium thermohydrosulfuricum)).